The primary structure comprises 646 residues: uncharacterized protein (646 aa).

10 helical membrane-spanning segments follow: residues 20-40 (AYFL…SFIF), 54-74 (LVKT…IFFI), 115-135 (LAAI…FFMI), 154-174 (AFVM…ILSL), 203-223 (TVLS…ANAI), 232-252 (ILIL…VAFF), 285-305 (LFLT…IYMF), 523-543 (GVAL…IVQG), 582-602 (IGFL…FAYA), and 613-633 (FLEA…YYIV).

Belongs to the ABC-4 integral membrane protein family.

The protein resides in the cell membrane. This is an uncharacterized protein from Bacillus subtilis (strain 168).